The sequence spans 953 residues: Serine-aspartate repeat-containing protein C (953 aa).

The first 50 residues, 1–50 (MNNKKTATNRKGMIPNRLNKFSIRKYSVGTASILVGTTLIFGLSGHEAKA), serve as a signal peptide directing secretion. A disordered region spans residues 51–160 (AEHTNGELNQ…AKNVSTTPKT (110 aa)). The ligand binding A region stretch occupies residues 51 to 495 (AEHTNGELNQ…GSSTANGDQK (445 aa)). Positions 56 to 71 (GELNQSKNETTAPSEN) are enriched in polar residues. Residues 72 to 83 (KTTEKVDSRQLK) are compositionally biased toward basic and acidic residues. The span at 84-114 (DNTQTATADQPKVTMSDSATVKETSSNMQSP) shows a compositional bias: polar residues. Residues 115–132 (QNATASQSTTQTSNVTTN) are compositionally biased toward low complexity. Positions 133–160 (DKSSTTYSNETDKSNLTQAKNVSTTPKT) are enriched in polar residues. CNA-B domains are found at residues 496 to 606 (KYNL…YKTP) and 607 to 717 (KYSL…EEET). The disordered stretch occupies residues 678-933 (TQTGTNTTED…NNSNNGTLFG (256 aa)). Composition is skewed to acidic residues over residues 685–695 (TEDDKDADGGE) and 712–892 (YYEE…DSDS). The short motif at 916–920 (LPETG) is the LPXTG sorting signal element. Residues 918–933 (ETGSENNNSNNGTLFG) are compositionally biased toward low complexity. Thr919 carries the pentaglycyl murein peptidoglycan amidated threonine modification. The propeptide at 920-953 (GSENNNSNNGTLFGGLFAALGSLLLFGRRKKQNK) is removed by sortase.

Belongs to the serine-aspartate repeat-containing protein (SDr) family. Homodimerizes; via N2-Domain. Interacts with host NRXN1; this interaction mediates bacterial attachment to host cells.

The protein resides in the secreted. It localises to the cell wall. In terms of biological role, cell surface-associated calcium-binding protein which plays an important role in adhesion and pathogenesis. Mediates interactions with components of the extracellular matrix such as host NRXN1 to promote bacterial adhesion. The protein is Serine-aspartate repeat-containing protein C (sdrC) of Staphylococcus aureus (strain Mu50 / ATCC 700699).